The primary structure comprises 189 residues: MKQSSPTYLKHHFLIAMPHMADPNFAQTVTYLVEHNEQGAMGLVINRPSGLNLAEVLEQLKPDALPPARCQHIDIYNGGPVQTDRGFVLHPSGLSYQSTLELGELAMSTSQDVLFAIAAGTGPEKSLISLGYAGWEAGQLEAELSDNAWLTCPADPAILFDLPAEERLSAAAARLGVNLSLLTAQAGHA.

This sequence belongs to the UPF0301 (AlgH) family.

In Pseudomonas aeruginosa (strain UCBPP-PA14), this protein is UPF0301 protein PA14_05290.